Here is a 235-residue protein sequence, read N- to C-terminus: uncharacterized protein (235 aa).

The ABC transporter domain maps to 2 to 235 (IKLKNVTKTY…EEKLRGFDDR (234 aa)). 38–45 (GPSGSGKS) is an ATP binding site.

Belongs to the ABC transporter superfamily.

This is an uncharacterized protein from Methanocaldococcus jannaschii (strain ATCC 43067 / DSM 2661 / JAL-1 / JCM 10045 / NBRC 100440) (Methanococcus jannaschii).